We begin with the raw amino-acid sequence, 497 residues long: Probable zinc metalloprotease TRV_03476 (497 aa).

The first 24 residues, methionine 1–alanine 24, serve as a signal peptide directing secretion. N-linked (GlcNAc...) asparagine glycosylation is found at asparagine 100 and asparagine 121. Residues histidine 171, aspartate 191, and glutamate 227 each contribute to the Zn(2+) site. N-linked (GlcNAc...) asparagine glycosylation is present at asparagine 242. Aspartate 254 lines the Zn(2+) pocket. One can recognise a Fibronectin type-III domain in the interval methionine 411 to proline 497. A glycan (N-linked (GlcNAc...) asparagine) is linked at asparagine 424.

Belongs to the peptidase M28 family. M28B subfamily. Zn(2+) serves as cofactor.

Its subcellular location is the secreted. The polypeptide is Probable zinc metalloprotease TRV_03476 (Trichophyton verrucosum (strain HKI 0517)).